The sequence spans 362 residues: Dual-specificity RNA methyltransferase RlmN (362 aa).

Catalysis depends on glutamate 91, which acts as the Proton acceptor. The Radical SAM core domain maps to 97 to 333 (EDDRGTLCVS…VTTRKTRGED (237 aa)). Cysteines 104 and 338 form a disulfide. Positions 111, 115, and 118 each coordinate [4Fe-4S] cluster. S-adenosyl-L-methionine is bound by residues 164-165 (GE), serine 196, 218-220 (SLH), and asparagine 295. Cysteine 338 functions as the S-methylcysteine intermediate in the catalytic mechanism.

Belongs to the radical SAM superfamily. RlmN family. It depends on [4Fe-4S] cluster as a cofactor.

The protein resides in the cytoplasm. It carries out the reaction adenosine(2503) in 23S rRNA + 2 reduced [2Fe-2S]-[ferredoxin] + 2 S-adenosyl-L-methionine = 2-methyladenosine(2503) in 23S rRNA + 5'-deoxyadenosine + L-methionine + 2 oxidized [2Fe-2S]-[ferredoxin] + S-adenosyl-L-homocysteine. It catalyses the reaction adenosine(37) in tRNA + 2 reduced [2Fe-2S]-[ferredoxin] + 2 S-adenosyl-L-methionine = 2-methyladenosine(37) in tRNA + 5'-deoxyadenosine + L-methionine + 2 oxidized [2Fe-2S]-[ferredoxin] + S-adenosyl-L-homocysteine. In terms of biological role, specifically methylates position 2 of adenine 2503 in 23S rRNA and position 2 of adenine 37 in tRNAs. m2A2503 modification seems to play a crucial role in the proofreading step occurring at the peptidyl transferase center and thus would serve to optimize ribosomal fidelity. This chain is Dual-specificity RNA methyltransferase RlmN, found in Methylobacillus flagellatus (strain ATCC 51484 / DSM 6875 / VKM B-1610 / KT).